Consider the following 184-residue polypeptide: ATP synthase subunit delta (184 aa).

Belongs to the ATPase delta chain family. In terms of assembly, F-type ATPases have 2 components, F(1) - the catalytic core - and F(0) - the membrane proton channel. F(1) has five subunits: alpha(3), beta(3), gamma(1), delta(1), epsilon(1). F(0) has three main subunits: a(1), b(2) and c(10-14). The alpha and beta chains form an alternating ring which encloses part of the gamma chain. F(1) is attached to F(0) by a central stalk formed by the gamma and epsilon chains, while a peripheral stalk is formed by the delta and b chains.

It localises to the cell inner membrane. F(1)F(0) ATP synthase produces ATP from ADP in the presence of a proton or sodium gradient. F-type ATPases consist of two structural domains, F(1) containing the extramembraneous catalytic core and F(0) containing the membrane proton channel, linked together by a central stalk and a peripheral stalk. During catalysis, ATP synthesis in the catalytic domain of F(1) is coupled via a rotary mechanism of the central stalk subunits to proton translocation. Its function is as follows. This protein is part of the stalk that links CF(0) to CF(1). It either transmits conformational changes from CF(0) to CF(1) or is implicated in proton conduction. This chain is ATP synthase subunit delta, found in Rickettsia canadensis (strain McKiel).